The primary structure comprises 513 residues: MKRLLLLFLFFITFSSAFPLVRMTENEENMQLAQAYLNQFYSLEIEGNHLVQSKNRSLIDDKIREMQAFFGLTVTGKLDSNTLEIMKTPRCGVPDVGQYGYTLPGWRKYNLTYRIINYTPDMARAAVDEAIQEGLEVWSKVTPLKFTKISKGIADIMIAFRTRVHGRCPRYFDGPLGVLGHAFPPGPGLGGDTHFDEDENWTKDGAGFNLFLVAAHEFGHALGLSHSNDQTALMFPNYVSLDPRKYPLSQDDINGIQSIYGGLPKEPAKPKEPTIPHACDPDLTFDAITTFRREVMFFKGRHLWRIYYDITDVEFELIASFWPSLPADLQAAYENPRDKILVFKDENFWMIRGYAVLPDYPKSIHTLGFPGRVKKIDAAVCDKTTRKTYFFVGIWCWRFDEMTQTMDKGFPQRVVKHFPGISIRVDAAFQYKGFFFFSRGSKQFEYDIKTKNITRIMRTNTWFQCKEPKNSSFGFDINKEKAHSGGIKILYHKSLSLFIFGIVHLLKNTSIYQ.

Positions Met1–Ala17 are cleaved as a signal peptide. A propeptide spans Phe18 to Gln98 (activation peptide). A glycan (N-linked (GlcNAc...) asparagine) is linked at Asn55. Positions Pro89–Val96 match the Cysteine switch motif. Cys91 contributes to the Zn(2+) binding site. Residue Asn110 is glycosylated (N-linked (GlcNAc...) asparagine). Residues Asp121 and Asp155 each coordinate Ca(2+). His165 contributes to the Zn(2+) binding site. The Ca(2+) site is built by Asp173, Gly174, and Val178. A Zn(2+)-binding site is contributed by His181. The Ca(2+) site is built by Gly188 and Asp192. His194 contacts Zn(2+). Ca(2+) is bound by residues Asp196 and Glu199. His216 lines the Zn(2+) pocket. Glu217 is an active-site residue. The Zn(2+) site is built by His220 and His226. Hemopexin repeat units lie at residues Pro276–Leu325, Pro326–Gly371, Val373–Ile421, and Ser422–Cys465. Cys279 and Cys465 are joined by a disulfide. Asp286 provides a ligand contact to Ca(2+). Asp377 and Asp426 together coordinate Ca(2+). N-linked (GlcNAc...) asparagine glycosylation is present at Asn452. Residues Lys466–Gln513 form a required for retention in the endoplasmic reticulum region.

This sequence belongs to the peptidase M10A family. Ca(2+) serves as cofactor. It depends on Zn(2+) as a cofactor. Post-translationally, N-glycosylated. Expressed in B-cells. Expressed in a subset of endometrial macrophages related to menstruation and in ovarian and peritoneal endometriotic lesions (at protein level).

The protein resides in the endoplasmic reticulum. Matrix metalloproteinases degrade protein components of the extracellular matrix such as fibronectin, laminin, gelatins and/or collagens. The sequence is that of Matrix metalloproteinase-27 (MMP27) from Homo sapiens (Human).